Consider the following 563-residue polypeptide: Arginine--tRNA ligase (563 aa).

Residues 122-132 (PNIAKPISMGH) carry the 'HIGH' region motif.

This sequence belongs to the class-I aminoacyl-tRNA synthetase family. As to quaternary structure, monomer.

It localises to the cytoplasm. The catalysed reaction is tRNA(Arg) + L-arginine + ATP = L-arginyl-tRNA(Arg) + AMP + diphosphate. This is Arginine--tRNA ligase from Latilactobacillus sakei subsp. sakei (strain 23K) (Lactobacillus sakei subsp. sakei).